The primary structure comprises 203 residues: 2-hydroxychromene-2-carboxylate isomerase (203 aa).

The active-site Nucleophile is the serine 11. Serine 11 lines the glutathione pocket. Substrate contacts are provided by residues lysine 43, 53-54 (NR), and tyrosine 84. Residues valine 168 and 179 to 182 (WGND) contribute to the glutathione site.

Belongs to the GST superfamily. NadH family. Requires glutathione as cofactor.

The catalysed reaction is 2-hydroxychromene-2-carboxylate = (3E)-4-(2-hydroxyphenyl)-2-oxobut-3-enoate. Its pathway is aromatic compound metabolism; naphthalene degradation. Functionally, involved in the naphthalene catabolic pathway. Catalyzes the reversible glutathione-dependent isomerization of 2-hydroxychromene-2-carboxylate (HCCA) to trans-O-hydroxybenzylidenepyruvate (THBPA). This Pseudomonas putida (Arthrobacter siderocapsulatus) protein is 2-hydroxychromene-2-carboxylate isomerase (nahD).